The primary structure comprises 129 residues: Small ribosomal subunit protein uS11 (129 aa).

The protein belongs to the universal ribosomal protein uS11 family. As to quaternary structure, part of the 30S ribosomal subunit. Interacts with proteins S7 and S18. Binds to IF-3.

In terms of biological role, located on the platform of the 30S subunit, it bridges several disparate RNA helices of the 16S rRNA. Forms part of the Shine-Dalgarno cleft in the 70S ribosome. The protein is Small ribosomal subunit protein uS11 of Stenotrophomonas maltophilia (strain R551-3).